The following is a 77-amino-acid chain: Small ribosomal subunit protein bS20 (77 aa).

This sequence belongs to the bacterial ribosomal protein bS20 family.

In terms of biological role, binds directly to 16S ribosomal RNA. The polypeptide is Small ribosomal subunit protein bS20 (Lactococcus lactis subsp. lactis (strain IL1403) (Streptococcus lactis)).